The sequence spans 586 residues: Eukaryotic translation initiation factor 2A (586 aa).

3 WD repeats span residues 23–63 (PSFT…NIVN), 125–163 (QKKMQNWCPCWADDESICARNVNNEVHFFENNNFNTIAN), and 356–401 (VASD…HNYE). The interval 434–531 (ELPSAEPKPA…SAVPVVTSGD (98 aa)) is disordered. Polar residues predominate over residues 470 to 479 (MKPQSGSSEK). The span at 495 to 506 (KKAAKQEAKADC) shows a compositional bias: basic and acidic residues. Residues 507–521 (SQESTQSSASQNTPR) are compositionally biased toward polar residues. The stretch at 532-583 (PEIDKKIKNLKKKLKAIEQLKEQAAAGKQLEKNQLEKIQKESALLQELEDLE) forms a coiled coil.

It belongs to the WD repeat EIF2A family.

Functionally, functions in the early steps of protein synthesis of a small number of specific mRNAs. Acts by directing the binding of methionyl-tRNAi to 40S ribosomal subunits. In contrast to the eIF-2 complex, it binds methionyl-tRNAi to 40S subunits in a codon-dependent manner, whereas the eIF-2 complex binds methionyl-tRNAi to 40S subunits in a GTP-dependent manner. This chain is Eukaryotic translation initiation factor 2A (EIF2A), found in Gallus gallus (Chicken).